Reading from the N-terminus, the 144-residue chain is Large ribosomal subunit protein uL11 (144 aa).

This sequence belongs to the universal ribosomal protein uL11 family. Part of the ribosomal stalk of the 50S ribosomal subunit. Interacts with L10 and the large rRNA to form the base of the stalk. L10 forms an elongated spine to which L12 dimers bind in a sequential fashion forming a multimeric L10(L12)X complex. Post-translationally, one or more lysine residues are methylated.

Functionally, forms part of the ribosomal stalk which helps the ribosome interact with GTP-bound translation factors. This Polaromonas naphthalenivorans (strain CJ2) protein is Large ribosomal subunit protein uL11.